The sequence spans 111 residues: SRA stem-loop-interacting RNA-binding protein, mitochondrial (111 aa).

An RRM domain is found at 19–96 (PVAFVRKIPW…VKLHVQPQRP (78 aa)). Residues 92–111 (QPQRPKALQGDQTSDEEKDF) form a disordered region. T104 carries the post-translational modification Phosphothreonine. A Phosphoserine modification is found at S105.

The protein localises to the mitochondrion. Its subcellular location is the nucleus. Functionally, RNA-binding protein that acts as a nuclear receptor corepressor. Probably acts by binding the SRA RNA, and repressing the SRA-mediated nuclear receptor coactivation. Binds the STR7 loop of SRA RNA. Also able to repress glucocorticoid (GR), androgen (AR), thyroid (TR) and VDR-mediated transactivation. This Bos taurus (Bovine) protein is SRA stem-loop-interacting RNA-binding protein, mitochondrial (SLIRP).